A 662-amino-acid chain; its full sequence is Biosynthetic arginine decarboxylase (662 aa).

K127 is subject to N6-(pyridoxal phosphate)lysine. Substrate is bound at residue 307-317 (FDVGGGLGVDY).

It belongs to the Orn/Lys/Arg decarboxylase class-II family. SpeA subfamily. Homotetramer. Mg(2+) serves as cofactor. Requires pyridoxal 5'-phosphate as cofactor.

It localises to the periplasm. The enzyme catalyses L-arginine + H(+) = agmatine + CO2. It participates in amine and polyamine biosynthesis; agmatine biosynthesis; agmatine from L-arginine: step 1/1. In terms of biological role, catalyzes the biosynthesis of agmatine from arginine. This is Biosynthetic arginine decarboxylase from Shigella flexneri.